The chain runs to 536 residues: CTP synthase (536 aa).

Residues 1–267 (MTKFIFVTGG…DDIVIKRLQL (267 aa)) form an amidoligase domain region. A CTP-binding site is contributed by serine 13. A UTP-binding site is contributed by serine 13. 14-19 (SLGKGI) serves as a coordination point for ATP. Residue tyrosine 54 participates in L-glutamine binding. Aspartate 71 serves as a coordination point for ATP. Positions 71 and 141 each coordinate Mg(2+). Residues 148–150 (DIE), 188–193 (KTKPTQ), and lysine 224 each bind CTP. UTP-binding positions include 188–193 (KTKPTQ) and lysine 224. 240 to 242 (RDA) is a binding site for ATP. A Glutamine amidotransferase type-1 domain is found at 293–535 (TIGLVGKYVS…IEASLKYQQN (243 aa)). Glycine 355 contacts L-glutamine. The active-site Nucleophile; for glutamine hydrolysis is the cysteine 382. L-glutamine contacts are provided by residues 383 to 386 (LGMQ), glutamate 406, and arginine 463. Catalysis depends on residues histidine 508 and glutamate 510.

The protein belongs to the CTP synthase family. As to quaternary structure, homotetramer.

The enzyme catalyses UTP + L-glutamine + ATP + H2O = CTP + L-glutamate + ADP + phosphate + 2 H(+). It catalyses the reaction L-glutamine + H2O = L-glutamate + NH4(+). The catalysed reaction is UTP + NH4(+) + ATP = CTP + ADP + phosphate + 2 H(+). It participates in pyrimidine metabolism; CTP biosynthesis via de novo pathway; CTP from UDP: step 2/2. With respect to regulation, allosterically activated by GTP, when glutamine is the substrate; GTP has no effect on the reaction when ammonia is the substrate. The allosteric effector GTP functions by stabilizing the protein conformation that binds the tetrahedral intermediate(s) formed during glutamine hydrolysis. Inhibited by the product CTP, via allosteric rather than competitive inhibition. Its function is as follows. Catalyzes the ATP-dependent amination of UTP to CTP with either L-glutamine or ammonia as the source of nitrogen. Regulates intracellular CTP levels through interactions with the four ribonucleotide triphosphates. In Staphylococcus aureus (strain NCTC 8325 / PS 47), this protein is CTP synthase.